A 72-amino-acid chain; its full sequence is Penaeidin-2a (72 aa).

The signal sequence occupies residues 1–21 (MRLVVCLVFLASFALVCQGEA). Cystine bridges form between cysteine 45/cysteine 59, cysteine 48/cysteine 66, and cysteine 60/cysteine 67. Position 71 is a lysine amide (lysine 71).

As to expression, higher expression in hemocytes and to a lesser extent in heart, testis, gills, intestine, lymphoid organ and hepatopancreas. Traces in eyes and subcuticular epithelium. Not present in the brain.

It localises to the cytoplasmic granule. Its function is as follows. Antibacterial activity against M.luteus and E.coli bacteria. Antifungal activity against N.crassa and F.oxysporum. Presents chitin-binding activity. This is Penaeidin-2a from Penaeus vannamei (Whiteleg shrimp).